The following is a 403-amino-acid chain: Serine/threonine transporter SstT (403 aa).

9 helical membrane-spanning segments follow: residues 14 to 34, 44 to 64, 79 to 99, 138 to 158, 175 to 195, 214 to 234, 295 to 315, 327 to 347, and 353 to 373; these read VTQIVIGLLAGIALALLAPAI, VFVSALKAVAPVLVFILVMAS, ILWLYLLGTFAAAVVAVFASM, ALLNANFIGVLTWAIGLGVAL, GVTLIVRVVIRFAPLGIFGLV, LAVLIGCMLFVALVMNPLIVF, MAGAAITITVLTLAAVHTLGI, VVAAVCACGASGVAGGSLLLI, and LFGIPSEIAMQVVAVGFIIGV.

The protein belongs to the dicarboxylate/amino acid:cation symporter (DAACS) (TC 2.A.23) family.

It is found in the cell inner membrane. The enzyme catalyses L-serine(in) + Na(+)(in) = L-serine(out) + Na(+)(out). It carries out the reaction L-threonine(in) + Na(+)(in) = L-threonine(out) + Na(+)(out). Involved in the import of serine and threonine into the cell, with the concomitant import of sodium (symport system). This is Serine/threonine transporter SstT from Pseudomonas putida (strain ATCC 47054 / DSM 6125 / CFBP 8728 / NCIMB 11950 / KT2440).